The sequence spans 122 residues: Ig heavy chain V region M603 (122 aa).

One can recognise an Ig-like domain in the interval 1 to 121 (EVKLVESGGG…WGAGTTVTVS (121 aa)).

This is Ig heavy chain V region M603 from Mus musculus (Mouse).